Consider the following 91-residue polypeptide: MTRMVFCQRLKKEAPGMAFQLVPGELGKRIFDNICQEAWAEWQKKQTMLINEKKLNMMNAEHRALLQTEMEKYLFEDGDVQIEGYVPPSEK.

The protein belongs to the Fe(2+)-trafficking protein family.

Could be a mediator in iron transactions between iron acquisition and iron-requiring processes, such as synthesis and/or repair of Fe-S clusters in biosynthetic enzymes. The sequence is that of Probable Fe(2+)-trafficking protein from Tolumonas auensis (strain DSM 9187 / NBRC 110442 / TA 4).